A 520-amino-acid chain; its full sequence is Sterile alpha motif domain-containing protein 3 (520 aa).

The 68-residue stretch at 4–71 (WSVDQVCKWL…KYKQGNQELK (68 aa)) folds into the SAM domain. The interval 67 to 104 (NQELKPTGGPADTSTLTPAQAAPEHEQNPSPTSHGDQT) is disordered. A compositionally biased stretch (polar residues) spans 94-104 (NPSPTSHGDQT).

The chain is Sterile alpha motif domain-containing protein 3 (Samd3) from Mus musculus (Mouse).